We begin with the raw amino-acid sequence, 156 residues long: ATP synthase subunit b (156 aa).

Residues 3–23 (ITLTIFAQALAFAGLIWIVAT) traverse the membrane as a helical segment.

Belongs to the ATPase B chain family. As to quaternary structure, F-type ATPases have 2 components, F(1) - the catalytic core - and F(0) - the membrane proton channel. F(1) has five subunits: alpha(3), beta(3), gamma(1), delta(1), epsilon(1). F(0) has three main subunits: a(1), b(2) and c(10-14). The alpha and beta chains form an alternating ring which encloses part of the gamma chain. F(1) is attached to F(0) by a central stalk formed by the gamma and epsilon chains, while a peripheral stalk is formed by the delta and b chains.

Its subcellular location is the cell inner membrane. F(1)F(0) ATP synthase produces ATP from ADP in the presence of a proton or sodium gradient. F-type ATPases consist of two structural domains, F(1) containing the extramembraneous catalytic core and F(0) containing the membrane proton channel, linked together by a central stalk and a peripheral stalk. During catalysis, ATP synthesis in the catalytic domain of F(1) is coupled via a rotary mechanism of the central stalk subunits to proton translocation. Functionally, component of the F(0) channel, it forms part of the peripheral stalk, linking F(1) to F(0). The sequence is that of ATP synthase subunit b from Xanthomonas axonopodis pv. citri (strain 306).